Consider the following 664-residue polypeptide: Bifunctional polymyxin resistance protein ArnA (664 aa).

A formyltransferase ArnAFT region spans residues 1 to 308 (MSTKAVVFAY…EFGLVAGSQM (308 aa)). The active-site Proton donor; for formyltransferase activity is His106. (6R)-10-formyltetrahydrofolate-binding positions include Arg116 and 138–142 (VKRAD). A dehydrogenase ArnADH region spans residues 318–664 (RRTRVLILGV…EAMAEKADQC (347 aa)). Residues Asp351 and 372–373 (DI) each bind NAD(+). Residues Ala397, Tyr402, and 436 to 437 (TS) each bind UDP-alpha-D-glucuronate. Glu438 functions as the Proton acceptor; for decarboxylase activity in the catalytic mechanism. UDP-alpha-D-glucuronate is bound by residues Arg464, Asn495, 529–538 (RLVDGGAQKR), and Tyr616. Catalysis depends on Arg622, which acts as the Proton donor; for decarboxylase activity.

The protein in the N-terminal section; belongs to the Fmt family. UDP-L-Ara4N formyltransferase subfamily. This sequence in the C-terminal section; belongs to the NAD(P)-dependent epimerase/dehydratase family. UDP-glucuronic acid decarboxylase subfamily. As to quaternary structure, homohexamer, formed by a dimer of trimers.

The catalysed reaction is UDP-alpha-D-glucuronate + NAD(+) = UDP-beta-L-threo-pentopyranos-4-ulose + CO2 + NADH. It carries out the reaction UDP-4-amino-4-deoxy-beta-L-arabinose + (6R)-10-formyltetrahydrofolate = UDP-4-deoxy-4-formamido-beta-L-arabinose + (6S)-5,6,7,8-tetrahydrofolate + H(+). It participates in nucleotide-sugar biosynthesis; UDP-4-deoxy-4-formamido-beta-L-arabinose biosynthesis; UDP-4-deoxy-4-formamido-beta-L-arabinose from UDP-alpha-D-glucuronate: step 1/3. It functions in the pathway nucleotide-sugar biosynthesis; UDP-4-deoxy-4-formamido-beta-L-arabinose biosynthesis; UDP-4-deoxy-4-formamido-beta-L-arabinose from UDP-alpha-D-glucuronate: step 3/3. Its pathway is bacterial outer membrane biogenesis; lipopolysaccharide biosynthesis. Functionally, bifunctional enzyme that catalyzes the oxidative decarboxylation of UDP-glucuronic acid (UDP-GlcUA) to UDP-4-keto-arabinose (UDP-Ara4O) and the addition of a formyl group to UDP-4-amino-4-deoxy-L-arabinose (UDP-L-Ara4N) to form UDP-L-4-formamido-arabinose (UDP-L-Ara4FN). The modified arabinose is attached to lipid A and is required for resistance to polymyxin and cationic antimicrobial peptides. The polypeptide is Bifunctional polymyxin resistance protein ArnA (Pseudomonas syringae pv. syringae (strain B728a)).